Here is a 236-residue protein sequence, read N- to C-terminus: Protein-S-isoprenylcysteine O-methyltransferase (236 aa).

A run of 4 helical transmembrane segments spans residues 3 to 23 (NLHTSIAVASICLTSAFLGCV), 24 to 44 (FGLGFFVWIIYGYSIGGFFAF), 76 to 96 (AYWLAMLVGLLECLLSGGKSF), and 108 to 128 (FLINFIFSVYQTSALGFLCLG). Residues 155-158 (HLLV), Tyr163, and 168-171 (HPSY) each bind S-adenosyl-L-methionine. Residues 174–194 (FFIWALGTQMLLGNFVSTLLF) form a helical membrane-spanning segment. Residue Arg205 participates in substrate binding. Position 209 (Glu209) interacts with S-adenosyl-L-methionine.

It belongs to the class VI-like SAM-binding methyltransferase superfamily. Isoprenylcysteine carboxyl methyltransferase family.

It localises to the membrane. The catalysed reaction is [protein]-C-terminal S-[(2E,6E)-farnesyl]-L-cysteine + S-adenosyl-L-methionine = [protein]-C-terminal S-[(2E,6E)-farnesyl]-L-cysteine methyl ester + S-adenosyl-L-homocysteine. Functionally, mediates C-terminal methylation of the isoprenylated C-terminal cysteine in M-factor. This Schizosaccharomyces pombe (strain 972 / ATCC 24843) (Fission yeast) protein is Protein-S-isoprenylcysteine O-methyltransferase (mam4).